The primary structure comprises 305 residues: Ribosomal RNA small subunit methyltransferase H (305 aa).

S-adenosyl-L-methionine is bound by residues glycine 30 to histidine 32, aspartate 49, phenylalanine 74, aspartate 96, and glutamine 103.

The protein belongs to the methyltransferase superfamily. RsmH family.

The protein localises to the cytoplasm. It carries out the reaction cytidine(1402) in 16S rRNA + S-adenosyl-L-methionine = N(4)-methylcytidine(1402) in 16S rRNA + S-adenosyl-L-homocysteine + H(+). Specifically methylates the N4 position of cytidine in position 1402 (C1402) of 16S rRNA. The sequence is that of Ribosomal RNA small subunit methyltransferase H from Francisella tularensis subsp. tularensis (strain FSC 198).